Here is a 160-residue protein sequence, read N- to C-terminus: Endoribonuclease YbeY (160 aa).

Zn(2+) is bound by residues His-125, His-129, and His-135.

It belongs to the endoribonuclease YbeY family. Zn(2+) serves as cofactor.

The protein resides in the cytoplasm. Functionally, single strand-specific metallo-endoribonuclease involved in late-stage 70S ribosome quality control and in maturation of the 3' terminus of the 16S rRNA. The protein is Endoribonuclease YbeY of Leuconostoc citreum (strain KM20).